Here is a 435-residue protein sequence, read N- to C-terminus: Light-independent protochlorophyllide reductase subunit N (435 aa).

Cys-23, Cys-48, and Cys-108 together coordinate [4Fe-4S] cluster.

Belongs to the BchN/ChlN family. Protochlorophyllide reductase is composed of three subunits; ChlL, ChlN and ChlB. Forms a heterotetramer of two ChlB and two ChlN subunits. Requires [4Fe-4S] cluster as cofactor.

It is found in the plastid. It localises to the chloroplast. It catalyses the reaction chlorophyllide a + oxidized 2[4Fe-4S]-[ferredoxin] + 2 ADP + 2 phosphate = protochlorophyllide a + reduced 2[4Fe-4S]-[ferredoxin] + 2 ATP + 2 H2O. It participates in porphyrin-containing compound metabolism; chlorophyll biosynthesis (light-independent). In terms of biological role, component of the dark-operative protochlorophyllide reductase (DPOR) that uses Mg-ATP and reduced ferredoxin to reduce ring D of protochlorophyllide (Pchlide) to form chlorophyllide a (Chlide). This reaction is light-independent. The NB-protein (ChlN-ChlB) is the catalytic component of the complex. The chain is Light-independent protochlorophyllide reductase subunit N from Chlorella vulgaris (Green alga).